The primary structure comprises 1510 residues: Chromosome partition protein MukB (1510 aa).

75–82 lines the ATP pocket; that stretch reads GGNGAGKS. Residues 346–706 are a coiled coil; it reads QHRLVDLSRE…LDEQISRLSQ (361 aa). Positions 707 to 824 are flexible hinge; the sequence is PDGSEDPRLN…EIPLFGCAAR (118 aa). 2 coiled-coil regions span residues 825–1154 and 1248–1304; these read EKRL…AAKV and IDAI…LQNI.

This sequence belongs to the SMC family. MukB subfamily. In terms of assembly, homodimerization via its hinge domain. Binds to DNA via its C-terminal region. Interacts, and probably forms a ternary complex, with MukE and MukF via its C-terminal region. The complex formation is stimulated by calcium or magnesium. Interacts with tubulin-related protein FtsZ.

The protein resides in the cytoplasm. It localises to the nucleoid. In terms of biological role, plays a central role in chromosome condensation, segregation and cell cycle progression. Functions as a homodimer, which is essential for chromosome partition. Involved in negative DNA supercoiling in vivo, and by this means organize and compact chromosomes. May achieve or facilitate chromosome segregation by condensation DNA from both sides of a centrally located replisome during cell division. The protein is Chromosome partition protein MukB of Haemophilus influenzae (strain ATCC 51907 / DSM 11121 / KW20 / Rd).